Here is a 256-residue protein sequence, read N- to C-terminus: 5'-nucleotidase SurE (256 aa).

The a divalent metal cation site is built by D9, D10, S42, and N95.

It belongs to the SurE nucleotidase family. Requires a divalent metal cation as cofactor.

The protein localises to the cytoplasm. The catalysed reaction is a ribonucleoside 5'-phosphate + H2O = a ribonucleoside + phosphate. Functionally, nucleotidase that shows phosphatase activity on nucleoside 5'-monophosphates. This is 5'-nucleotidase SurE from Campylobacter curvus (strain 525.92).